A 130-amino-acid polypeptide reads, in one-letter code: Small ribosomal subunit protein uS11 (130 aa).

The protein belongs to the universal ribosomal protein uS11 family. As to quaternary structure, part of the 30S ribosomal subunit. Interacts with proteins S7 and S18. Binds to IF-3.

In terms of biological role, located on the platform of the 30S subunit, it bridges several disparate RNA helices of the 16S rRNA. Forms part of the Shine-Dalgarno cleft in the 70S ribosome. In Thermosynechococcus vestitus (strain NIES-2133 / IAM M-273 / BP-1), this protein is Small ribosomal subunit protein uS11.